The chain runs to 440 residues: MSNQGAFDGAANVESGSRVFVYEVVGMRQNEETDQTNYPIRKSGSVFIRVPYNRMNQEMQRITRLGGKIVTIQTVSALQQLNGRTTIATVTDASSEIAKSEGNGKATPVKTDSGAKAFAKPPAEEQLKKKDNKGNTMTQAKAKHADVPVNLYRPNAPFIGKVISNEPLVKEGGIGIVQHIKFDLTGGNLKYIEGQSIGIIPPGVDKNGKPEKLRLYSIASTRHGDDVDDKTISLCVRQLEYKHPESGETVYGVCSTYLTHIEPGSEVKITGPVGKEMLLPDDPEANVIMLATGTGIAPMRTYLWRMFKDAERAANPEYQFKGFSWLVFGVPTTPNILYKEELEEIQQKYPDNFRLTYAISREQKNPQGGRMYIQDRVAEHADELWQLIKNQKTHTYICGLRGMEEGIDAALSAAAAKEGVTWSDYQKDLKKAGRWHVETY.

In terms of domain architecture, CpcD-like spans 17–75 (SRVFVYEVVGMRQNEETDQTNYPIRKSGSVFIRVPYNRMNQEMQRITRLGGKIVTIQTV). A disordered region spans residues 99-142 (KSEGNGKATPVKTDSGAKAFAKPPAEEQLKKKDNKGNTMTQAKA). Residues 122-133 (PAEEQLKKKDNK) are compositionally biased toward basic and acidic residues. In terms of domain architecture, FAD-binding FR-type spans 155 to 279 (NAPFIGKVIS…TGPVGKEMLL (125 aa)). Residues 214–217 (RLYS), 235–237 (CVR), Y241, 253–255 (VCS), and T294 contribute to the FAD site. 2 residues coordinate NADP(+): S217 and R237. Residues T294, 330-331 (VP), 360-361 (SR), 370-374 (RMYIQ), 399-400 (GL), and E438 each bind NADP(+).

This sequence belongs to the ferredoxin--NADP reductase type 1 family. FAD serves as cofactor.

The protein localises to the cellular thylakoid membrane. The catalysed reaction is 2 reduced [2Fe-2S]-[ferredoxin] + NADP(+) + H(+) = 2 oxidized [2Fe-2S]-[ferredoxin] + NADPH. The sequence is that of Ferredoxin--NADP reductase (petH) from Nostoc sp. (strain ATCC 29151 / PCC 7119) (Anabaena sp.).